A 271-amino-acid polypeptide reads, in one-letter code: Shikimate dehydrogenase-like protein HI_0607 (271 aa).

Residue K67 is the Proton donor/acceptor of the active site. D103 is a binding site for substrate. NADP(+) contacts are provided by residues 126-130, K154, and S184; that span reads GSGGM.

The protein belongs to the shikimate dehydrogenase-like family. In terms of assembly, homodimer.

The enzyme catalyses shikimate + NADP(+) = 3-dehydroshikimate + NADPH + H(+). Functionally, in vitro, is able to catalyze the NADP(+)-dependent oxidation of shikimate to 3-dehydroshikimate. However, has much lower activity than classical shikimate dehydrogenases AroE, indicating that shikimate may not be the biological substrate. Cannot utilize NAD(+) instead of NADP(+). Is not able to catalyze the oxidation of quinate. The chain is Shikimate dehydrogenase-like protein HI_0607 from Haemophilus influenzae (strain ATCC 51907 / DSM 11121 / KW20 / Rd).